A 477-amino-acid polypeptide reads, in one-letter code: Proton extrusion protein PxcA (477 aa).

3 helical membrane-spanning segments follow: residues 239-259, 354-374, and 437-457; these read FILLVILVPLLIHQLSKITFV, GIKNIFCDFISLITFVIIIST, and FNFLFIATFPVILDAVFKYWI.

The protein belongs to the CemA family.

The protein localises to the cell inner membrane. Functionally, required for H(+) efflux immediately after light irradiation to form a rapid H(+) concentration gradient across the thylakoid membranes. Together with PxcL, contributes to transient H(+) uptake following dark to light transition. In Trichodesmium erythraeum (strain IMS101), this protein is Proton extrusion protein PxcA.